We begin with the raw amino-acid sequence, 382 residues long: F-box protein At3g19470 (382 aa).

The F-box domain maps to 1-44 (MYNLPRDLPEEVLCRIPLTSLRPVRSTCKKWSTLSKCGSFAKKH).

This chain is F-box protein At3g19470, found in Arabidopsis thaliana (Mouse-ear cress).